We begin with the raw amino-acid sequence, 530 residues long: 26S proteasome non-ATPase regulatory subunit 3 (530 aa).

Residues 1 to 16 (MKQEGSARRRGADKAK) are compositionally biased toward basic and acidic residues. Residues 1-65 (MKQEGSARRR…TEHSQRELDT (65 aa)) are disordered. Pro residues predominate over residues 17 to 30 (PPPGGEQEPPPPAP). Lysine 36 is covalently cross-linked (Glycyl lysine isopeptide (Lys-Gly) (interchain with G-Cter in SUMO1); alternate). A Glycyl lysine isopeptide (Lys-Gly) (interchain with G-Cter in SUMO2); alternate cross-link involves residue lysine 36. One can recognise a PCI domain in the interval 282–461 (ARYLYYTGRI…GYVQSKEMID (180 aa)). Phosphoserine is present on residues serine 414 and serine 426. The segment at 496–530 (SYNKDLESAEERREREQQDLEFAKEMAEDDDDSFP) is disordered. Positions 497-521 (YNKDLESAEERREREQQDLEFAKEM) are enriched in basic and acidic residues.

Belongs to the proteasome subunit S3 family. Component of the 19S proteasome regulatory particle complex. The 26S proteasome consists of a 20S core particle (CP) and two 19S regulatory subunits (RP). The regulatory particle is made of a lid composed of 9 subunits including PSMD3, a base containing 6 ATPases and few additional components. Interacts with UBQLN1 (via ubiquitin-like domain). Interacts with ERCC6.

Component of the 26S proteasome, a multiprotein complex involved in the ATP-dependent degradation of ubiquitinated proteins. This complex plays a key role in the maintenance of protein homeostasis by removing misfolded or damaged proteins, which could impair cellular functions, and by removing proteins whose functions are no longer required. Therefore, the proteasome participates in numerous cellular processes, including cell cycle progression, apoptosis, or DNA damage repair. The protein is 26S proteasome non-ATPase regulatory subunit 3 (Psmd3) of Mus musculus (Mouse).